The chain runs to 397 residues: Glycine betaine/carnitine transport ATP-binding protein GbuA (397 aa).

In terms of domain architecture, ABC transporter spans 28–264 (KSKTDILKET…PANEYVEKFI (237 aa)). ATP is bound at residue 60–67 (GLSGSGKS). 2 CBS domains span residues 279–335 (MIRP…NITS) and 340–395 (LHRD…EVNV).

This sequence belongs to the ABC transporter superfamily. The complex is composed of two ATP-binding proteins (GbuA), two transmembrane proteins (GbuB) and a solute-binding protein (GbuC).

The catalysed reaction is a quaternary ammonium(out) + ATP + H2O = a quaternary ammonium(in) + ADP + phosphate + H(+). The complex is activated by an osmotic gradient or by low temperature. Part of the ABC transporter complex GbuABC involved in glycine betaine uptake. Responsible for energy coupling to the transport system. Involved, with BetL and OpuC, in osmoprotection and cryoprotection of Listeria. Can also uptake carnitine when carnitine is abundant in the growth medium. This Listeria monocytogenes serotype 1/2a (strain 10403S) protein is Glycine betaine/carnitine transport ATP-binding protein GbuA (gbuA).